A 292-amino-acid polypeptide reads, in one-letter code: Ribosomal RNA small subunit methyltransferase A (292 aa).

The S-adenosyl-L-methionine site is built by Asn28, Leu30, Gly55, Glu76, Asp101, and Asn126.

Belongs to the class I-like SAM-binding methyltransferase superfamily. rRNA adenine N(6)-methyltransferase family. RsmA subfamily.

It localises to the cytoplasm. It catalyses the reaction adenosine(1518)/adenosine(1519) in 16S rRNA + 4 S-adenosyl-L-methionine = N(6)-dimethyladenosine(1518)/N(6)-dimethyladenosine(1519) in 16S rRNA + 4 S-adenosyl-L-homocysteine + 4 H(+). In terms of biological role, specifically dimethylates two adjacent adenosines (A1518 and A1519) in the loop of a conserved hairpin near the 3'-end of 16S rRNA in the 30S particle. May play a critical role in biogenesis of 30S subunits. This is Ribosomal RNA small subunit methyltransferase A from Bacillus cereus (strain G9842).